Reading from the N-terminus, the 309-residue chain is Elongation factor Ts (309 aa).

The tract at residues 82-85 is involved in Mg(2+) ion dislocation from EF-Tu; it reads TDFV.

This sequence belongs to the EF-Ts family.

Its subcellular location is the cytoplasm. Its function is as follows. Associates with the EF-Tu.GDP complex and induces the exchange of GDP to GTP. It remains bound to the aminoacyl-tRNA.EF-Tu.GTP complex up to the GTP hydrolysis stage on the ribosome. In Rickettsia typhi (strain ATCC VR-144 / Wilmington), this protein is Elongation factor Ts.